A 302-amino-acid chain; its full sequence is Myeloid-associated differentiation marker-like protein 2 (302 aa).

MARVEL domains follow at residues 13-149 (AIWS…AKPG) and 154-298 (YMAT…RLRI). 7 helical membrane passes run 45-65 (AYGT…ILIV), 87-107 (AYAM…PMYF), 124-144 (LAVS…VFLT), 158-178 (ASGL…GALA), 191-211 (WCVA…ILNI), 225-245 (FVVI…VIWP), and 273-293 (LAVT…LIYT).

Belongs to the MAL family.

It is found in the membrane. This is Myeloid-associated differentiation marker-like protein 2 (myadml2) from Xenopus laevis (African clawed frog).